Reading from the N-terminus, the 570-residue chain is Putative diflavin flavoprotein A 5 (570 aa).

Residues 38 to 231 (ERGTTSNSYV…LQVRLYAVGH (194 aa)) are zinc metallo-hydrolase. A Flavodoxin-like domain is found at 260-402 (VALLYASAYG…VGTDFAQTLK (143 aa)). A flavodoxin-reductase-like region spans residues 421 to 570 (VGRIVGSVCV…INHRKTGNHY (150 aa)).

The protein in the N-terminal section; belongs to the zinc metallo-hydrolase group 3 family. In the C-terminal section; belongs to the flavodoxin reductase family. Fe cation serves as cofactor.

Mediates electron transfer from NADH to oxygen, reducing it to water. This modular protein has 3 redox cofactors, in other organisms the same activity requires 2 or 3 proteins. This is Putative diflavin flavoprotein A 5 (dfa5) from Nostoc sp. (strain PCC 7120 / SAG 25.82 / UTEX 2576).